The following is a 410-amino-acid chain: Ribosomal protein S6 kinase-related protein (410 aa).

The 168-residue stretch at 107 to 274 folds into the Protein kinase domain; sequence LKILGLVAKG…GTLQYMAPEV (168 aa). ATP-binding positions include 113 to 121 and lysine 136; that span reads VAKGSFGTV. The active-site Proton acceptor is aspartate 229.

Belongs to the protein kinase superfamily. Ser/Thr protein kinase family.

The enzyme catalyses L-seryl-[protein] + ATP = O-phospho-L-seryl-[protein] + ADP + H(+). It catalyses the reaction L-threonyl-[protein] + ATP = O-phospho-L-threonyl-[protein] + ADP + H(+). This chain is Ribosomal protein S6 kinase-related protein, found in Homo sapiens (Human).